We begin with the raw amino-acid sequence, 332 residues long: DNA-directed RNA polymerase subunit alpha (332 aa).

An alpha N-terminal domain (alpha-NTD) region spans residues 1-226; that stretch reads MLIAQRPTLT…ELFGLARELN (226 aa). The tract at residues 243 to 332 is alpha C-terminal domain (alpha-CTD); it reads LSSELSMPIE…GYDEDESTTI (90 aa).

The protein belongs to the RNA polymerase alpha chain family. In terms of assembly, homodimer. The RNAP catalytic core consists of 2 alpha, 1 beta, 1 beta' and 1 omega subunit. When a sigma factor is associated with the core the holoenzyme is formed, which can initiate transcription.

It carries out the reaction RNA(n) + a ribonucleoside 5'-triphosphate = RNA(n+1) + diphosphate. Its function is as follows. DNA-dependent RNA polymerase catalyzes the transcription of DNA into RNA using the four ribonucleoside triphosphates as substrates. The protein is DNA-directed RNA polymerase subunit alpha of Leifsonia xyli subsp. xyli (strain CTCB07).